Here is a 155-residue protein sequence, read N- to C-terminus: Small ribosomal subunit protein bS16 (155 aa).

The interval glutamate 100–alanine 155 is disordered. The span at alanine 124–glutamate 143 shows a compositional bias: low complexity.

It belongs to the bacterial ribosomal protein bS16 family.

This chain is Small ribosomal subunit protein bS16, found in Synechococcus sp. (strain JA-3-3Ab) (Cyanobacteria bacterium Yellowstone A-Prime).